The primary structure comprises 337 residues: Alcohol dehydrogenase 1 (337 aa).

Zn(2+) contacts are provided by C37, H58, C89, C92, C95, C103, and C145.

It belongs to the zinc-containing alcohol dehydrogenase family. Multimeric (with different ratios of monomers). The cofactor is Zn(2+).

It carries out the reaction a primary alcohol + NAD(+) = an aldehyde + NADH + H(+). The enzyme catalyses a secondary alcohol + NAD(+) = a ketone + NADH + H(+). The protein operates within alcohol metabolism; ethanol biosynthesis via fermentation pathway. Inhibited by ethanol. The chain is Alcohol dehydrogenase 1 (adhA) from Zymomonas mobilis subsp. mobilis (strain ATCC 31821 / ZM4 / CP4).